We begin with the raw amino-acid sequence, 100 residues long: MAKQSMIQRELKRERLISKYSAKRQLLKEELKTVSSYNDKLAIYKKLEKLPRNSSPNRHRNRCWATGRSRAYYRDFGLSRHVLREMAHEGLIPGLTKSSW.

It belongs to the universal ribosomal protein uS14 family. In terms of assembly, part of the 30S ribosomal subunit.

The protein resides in the plastid. The protein localises to the chloroplast. In terms of biological role, binds 16S rRNA, required for the assembly of 30S particles. The protein is Small ribosomal subunit protein uS14c of Emiliania huxleyi (Coccolithophore).